We begin with the raw amino-acid sequence, 501 residues long: Geissoschizine oxidase (501 aa).

The helical transmembrane segment at 1–21 threads the bilayer; it reads MEFSFSSPALYIVYFLLFFVV. N-linked (GlcNAc...) asparagine glycosylation is present at asparagine 60. Cysteine 442 contributes to the heme binding site.

Belongs to the cytochrome P450 family. It depends on heme as a cofactor. Expressed in leaf epidermis. Also present in the leaf internal phloem-associated parenchyma (IPAP) inside the mesophyll.

The protein resides in the membrane. It carries out the reaction (19E)-geissoschizine + reduced [NADPH--hemoprotein reductase] + O2 = akuammicine + formate + oxidized [NADPH--hemoprotein reductase] + H2O + H(+). It catalyses the reaction (19E)-geissoschizine + reduced [NADPH--hemoprotein reductase] + O2 = 3,17-didehydrostemmadenine + oxidized [NADPH--hemoprotein reductase] + 2 H2O. Its pathway is alkaloid biosynthesis. Functionally, component of the seco-iridoid and derivatives monoterpenoid indole alkaloids (MIAs, e.g. vincristine, quinine, and strychnine) biosynthesis pathway. Catalyzes the oxidation of 19E-geissoschizine to produce a short-lived MIA unstable intermediate which can be spontaneously converted into akuammicine or oxidized by Redox1 and Redox2 to produce stemmadenine and 16S/R-deshydroxymethylstemmadenine (16S/R-DHS). This is Geissoschizine oxidase from Catharanthus roseus (Madagascar periwinkle).